A 445-amino-acid chain; its full sequence is Phosphoglucosamine mutase 1 (445 aa).

Residue Ser-102 is the Phosphoserine intermediate of the active site. Mg(2+) contacts are provided by Ser-102, Asp-241, Asp-243, and Asp-245. Ser-102 carries the post-translational modification Phosphoserine.

Belongs to the phosphohexose mutase family. The cofactor is Mg(2+). Post-translationally, activated by phosphorylation.

It catalyses the reaction alpha-D-glucosamine 1-phosphate = D-glucosamine 6-phosphate. In terms of biological role, catalyzes the conversion of glucosamine-6-phosphate to glucosamine-1-phosphate. The protein is Phosphoglucosamine mutase 1 of Shewanella baltica (strain OS185).